A 423-amino-acid polypeptide reads, in one-letter code: MKLCALFAGAVISTSAVAASWEYAWPEEWHQEWPLDEQGPDAWSSSECTVSRLDAFEMEKGRKPVFFSTDPLDDPEAPKMLPLNSTGGEQWEFDGVSEDGQMAFCFGFYRDPNYAILGTGNLRLSAEFSRPNKTRFVRVDYPSSSTVTSCPWGTRGVWKGADYSYTFEVTRDIKVARIGVDAPDLKGSVVMRSVMPPRYPDGSTYPNKEASTEVVPYFRWLEAIPAADVRVDVVMDGQPYRWSGLGGHERLWTAFSWFTCLQAMTAVRVKAGPFAAVHGSFVSAIDKGLYRPSTVLAENDEVIFSTTLHEPSDTEDYAVFTKTYGGRVSGNLKEKATGYELVMVSPSAKKQWSFSITNEAIGFEYMLGEGVGGTGFSGRAVGGSIGLKQYFGPSFAETLEFPKRSYLFKSNYVDAVPEEKGEL.

Residues 1–18 (MKLCALFAGAVISTSAVA) form the signal peptide. N-linked (GlcNAc...) asparagine glycans are attached at residues Asn-84 and Asn-132.

The protein belongs to the Diels-Alderase family.

It functions in the pathway secondary metabolite biosynthesis. Its function is as follows. Diels-Alderase; part of the gene cluster that mediates the biosynthesis of chaetoglobosin A which has a unique inhibitory activity against actin polymerization in mammalian cells. Chaetoglobosin A and its intermediates are involved in the morphological differentiation of C.globosum. The first step of the pathway is the synthesis of prochaetoglobosin I via condensation of one acetyl-CoA, 8 malonyl-CoA, and a L-tryptophan molecule by the PKS-NRPS hybrid synthetase cheA, followed by reduction of backbone double bond to install desired geometry by the enoyl reductase cheB. Further multiple oxidation steps performed by the cytochrome P450 monooxygenases cheE and cheG, as well as by the FAD-linked oxidoreductase cheF, lead to the formation of chaetoglobosin A. Depending on the order of action of these reductases, distinct intermediates can be identified. Within the pathway, the cytochrome P450 monooxygenase cheE catalyzes a stereospecific epoxidation on prochaetoglobosin I, cytoglobosin D, and chaetoglobosin J intermediates. The FAD-linked oxidoreductase cheF performs dehydrogenation of the C-20 hydroxyl groups in the 20-dihyrochaetoglobosin A and cytoglobosin D intermediates. Finally, the cytochrome P450 monooxygenase cheG can catalyze the stereospecific dihydroxylation of prochaetoglobosin I and prochaetoglobosin IV at C-19 and C-20, respectively. The Diels-Alderase cheD may play a role in the post-PKS-NRPS biosynthetic steps catalyzing Diels-Alder cyclization. This is Diels-Alderase cheD from Chaetomium globosum (strain ATCC 6205 / CBS 148.51 / DSM 1962 / NBRC 6347 / NRRL 1970) (Soil fungus).